A 256-amino-acid polypeptide reads, in one-letter code: Tyrosine-protein kinase-interacting protein (256 aa).

Acidic residues predominate over residues 1-14 (MANEGEEIELTEFP). The interval 1–49 (MANEGEEIELTEFPETEKERKDEEKLSSCSEETTNTSSSSGSDHVPVPI) is disordered. The Cytoplasmic segment spans residues 1-228 (MANEGEEIEL…DLKRLENKIN (228 aa)). Residues 15–26 (ETEKERKDEEKL) are compositionally biased toward basic and acidic residues. Low complexity predominate over residues 27 to 42 (SSCSEETTNTSSSSGS). Phosphotyrosine; by host LCK is present on Tyr114. At Tyr127 the chain carries Phosphotyrosine; by host. The tract at residues 146 to 155 (EDLQSFLEKY) is CSKH/LBD2. Residues 162–183 (PKRDLSATWDPGMPTPPLPPRP) form a disordered region. Positions 174–183 (MPTPPLPPRP) are SH3B/LBD1. Over residues 174–183 (MPTPPLPPRP) the composition is skewed to pro residues. Residues 229–249 (VIICLVVVILAVLLLVTVLSI) traverse the membrane as a helical segment. The Extracellular segment spans residues 250–256 (LHIGMKS).

Binds host LCK, human WDR48 and human NXF1/TAP. Forms a complex with activated LCK and STAT1 and STAT3. Phosphorylation on Tyr-114 acts as a docking site for the recruitment of STATs 1 and 3.

It is found in the host cell membrane. Functionally, plays a critical role in virus induced T-cell transformation. Binds to T-cell-specific tyrosine kinase LCK SH2 and SH3 domains, thereby activating its kinase activity. Once phosphorylated by host LCK, forms a complex with at least STAT 1 and 3, resulting on the phosphorylation of STAT3 and presumably STAT1, and their migration into the nucleus to induce transcription of target genes. Stimulates host ILF3/NF-AT-90 activity. Association with host NXF1/TAP transduces the signal up-regulating surface expression of adhesion molecules as well as activating NF-kappa-B activity. Acts synergistically with StpC to stimulate NF-kappa-B activity and interleukin-2 gene expression. Activation of NF-kappa-B protects lymphocytes from apoptosis, thereby facilitating viral induced cell transformation. May cause down-regulation of host LCK and cell apoptosis when stably overexpressed ex vivo. Interaction with WDR48 induce degradation of T-cell receptor in a lysosome-dependent fashion, when both proteins are overexpressed. The biological effect of this interaction remains controversial since no T-cell receptor degradation is observed in infected cells. This is Tyrosine-protein kinase-interacting protein from Saimiri sciureus (Common squirrel monkey).